Reading from the N-terminus, the 153-residue chain is MASDAASLLVLQLVLQPTLVTGITIQTAIKNFRILHVDYPMVNYPKGFHGYCNGLMAYVRGKLQDWYCPKIHYVVHAPFESIQKFCKYSESFCEDYNEYCTLTQNSFPITVCTLDHKQAPTSCSYNSTLTNQRLYLLCSRKHDAEPIGVIGLY.

An N-terminal signal peptide occupies residues 1–22 (MASDAASLLVLQLVLQPTLVTG).

This sequence belongs to the pancreatic ribonuclease family.

Its subcellular location is the secreted. Functionally, does not exhibit any ribonuclease activity. The sequence is that of Probable inactive ribonuclease-like protein 13 (Rnase13) from Rattus norvegicus (Rat).